Here is a 739-residue protein sequence, read N- to C-terminus: Pre-mRNA-splicing factor ATP-dependent RNA helicase ddx-15 (739 aa).

Over residues 1 to 19 the composition is skewed to basic and acidic residues; that stretch reads MSSRHRLDLDGSGRGDRRR. Residues 1 to 49 are disordered; the sequence is MSSRHRLDLDGSGRGDRRRSPNRRSRSRSRSPHRRSSPDRKRQIGAVGN. The segment covering 20–35 has biased composition (basic residues); the sequence is SPNRRSRSRSRSPHRR. The region spanning 86–257 is the Helicase ATP-binding domain; sequence MELLRNNQCI…FEDCPLLSVP (172 aa). 99–106 lines the ATP pocket; sequence GETGSGKT. The DEAH box signature appears at 204-207; it reads DEAH. Residues 282–462 form the Helicase C-terminal domain; sequence TVIQIHMVEE…SVVLQLKKLG (181 aa).

This sequence belongs to the DEAD box helicase family. DEAH subfamily. DDX15/PRP43 sub-subfamily.

Its subcellular location is the nucleus. It carries out the reaction ATP + H2O = ADP + phosphate + H(+). Pre-mRNA processing factor involved in disassembly of spliceosomes after the release of mature mRNA. The chain is Pre-mRNA-splicing factor ATP-dependent RNA helicase ddx-15 from Caenorhabditis elegans.